The chain runs to 368 residues: Aminomethyltransferase (368 aa).

The protein belongs to the GcvT family. In terms of assembly, the glycine cleavage system is composed of four proteins: P, T, L and H.

It carries out the reaction N(6)-[(R)-S(8)-aminomethyldihydrolipoyl]-L-lysyl-[protein] + (6S)-5,6,7,8-tetrahydrofolate = N(6)-[(R)-dihydrolipoyl]-L-lysyl-[protein] + (6R)-5,10-methylene-5,6,7,8-tetrahydrofolate + NH4(+). In terms of biological role, the glycine cleavage system catalyzes the degradation of glycine. This Xylella fastidiosa (strain 9a5c) protein is Aminomethyltransferase.